The primary structure comprises 514 residues: Photosystem II CP47 reaction center protein (514 aa).

Transmembrane regions (helical) follow at residues 21-36 (AVHLMHTALVLGWAGS), 109-123 (IVLSGLFFLAAVWHW), 148-164 (GGHLFLLGFLCFNFGTF), 211-226 (IAAGITLMIGGVFHLT), 245-260 (ALASAIAAVFGAAFVV), and 465-480 (CFALLFFFGHIWHGAR).

Belongs to the PsbB/PsbC family. PsbB subfamily. PSII is composed of 1 copy each of membrane proteins PsbA, PsbB, PsbC, PsbD, PsbE, PsbF, PsbH, PsbI, PsbJ, PsbK, PsbL, PsbM, PsbT, PsbX, PsbY, PsbZ, Psb30/Ycf12, peripheral proteins PsbO, CyanoQ (PsbQ), PsbU, PsbV and a large number of cofactors. It forms dimeric complexes. The cofactor is Binds multiple chlorophylls. PSII binds additional chlorophylls, carotenoids and specific lipids..

The protein localises to the cellular thylakoid membrane. Functionally, one of the components of the core complex of photosystem II (PSII). It binds chlorophyll and helps catalyze the primary light-induced photochemical processes of PSII. PSII is a light-driven water:plastoquinone oxidoreductase, using light energy to abstract electrons from H(2)O, generating O(2) and a proton gradient subsequently used for ATP formation. The protein is Photosystem II CP47 reaction center protein of Prochlorothrix hollandica.